The sequence spans 70 residues: Ribosome modulation factor (70 aa).

Belongs to the ribosome modulation factor family.

Its subcellular location is the cytoplasm. Its function is as follows. During stationary phase, converts 70S ribosomes to an inactive dimeric form (100S ribosomes). The polypeptide is Ribosome modulation factor (Marinobacter adhaerens (strain DSM 23420 / HP15)).